The sequence spans 70 residues: Small ribosomal subunit protein bS21B (70 aa).

Belongs to the bacterial ribosomal protein bS21 family.

In Burkholderia thailandensis (strain ATCC 700388 / DSM 13276 / CCUG 48851 / CIP 106301 / E264), this protein is Small ribosomal subunit protein bS21B.